The chain runs to 288 residues: Transposase InsF for insertion sequence IS3fB (288 aa).

The region spanning 124 to 287 (YASGPNQKWA…SPEQFENQNL (164 aa)) is the Integrase catalytic domain.

This sequence belongs to the transposase IS3/IS150/IS904 family.

Functionally, involved in the transposition of the insertion sequence IS3. In Escherichia coli (strain K12), this protein is Transposase InsF for insertion sequence IS3fB (insF7).